The following is a 654-amino-acid chain: Acetyl-coenzyme A synthetase (654 aa).

Residues 190 to 193 (RGGK) and threonine 313 each bind CoA. Residues 389-391 (GEP), 413-418 (DTWWQT), aspartate 504, and arginine 519 contribute to the ATP site. Serine 527 contacts CoA. Arginine 530 is an ATP binding site. Positions 541 and 546 each coordinate Mg(2+). Lysine 613 carries the post-translational modification N6-acetyllysine.

It belongs to the ATP-dependent AMP-binding enzyme family. It depends on Mg(2+) as a cofactor. In terms of processing, acetylated. Deacetylation by the SIR2-homolog deacetylase activates the enzyme.

It catalyses the reaction acetate + ATP + CoA = acetyl-CoA + AMP + diphosphate. Functionally, catalyzes the conversion of acetate into acetyl-CoA (AcCoA), an essential intermediate at the junction of anabolic and catabolic pathways. AcsA undergoes a two-step reaction. In the first half reaction, AcsA combines acetate with ATP to form acetyl-adenylate (AcAMP) intermediate. In the second half reaction, it can then transfer the acetyl group from AcAMP to the sulfhydryl group of CoA, forming the product AcCoA. The polypeptide is Acetyl-coenzyme A synthetase (Leptospira borgpetersenii serovar Hardjo-bovis (strain JB197)).